A 135-amino-acid chain; its full sequence is MLSPKRTRFRKQHRGRLKGISYRGNRICFGRYALQTLEPAWITSRQIEAGRRAMTRNVRRGGKIWVRIFPDKPVTVRPAETRMGSGKGSPEYWVAVVKPGKILYEMGGVPENIARKAISIAASKMPIKTQFIISE.

This sequence belongs to the universal ribosomal protein uL16 family. As to quaternary structure, part of the 50S ribosomal subunit.

The protein resides in the plastid. It localises to the chloroplast. The protein is Large ribosomal subunit protein uL16c of Aethionema cordifolium (Lebanon stonecress).